The primary structure comprises 359 residues: DNA polymerase IV (359 aa).

A UmuC domain is found at 7–188 (IIHIDMDAFY…LPIGKFFGVG (182 aa)). The Mg(2+) site is built by aspartate 11 and aspartate 106. The active site involves glutamate 107.

The protein belongs to the DNA polymerase type-Y family. In terms of assembly, monomer. Requires Mg(2+) as cofactor.

It is found in the cytoplasm. It carries out the reaction DNA(n) + a 2'-deoxyribonucleoside 5'-triphosphate = DNA(n+1) + diphosphate. In terms of biological role, poorly processive, error-prone DNA polymerase involved in untargeted mutagenesis. Copies undamaged DNA at stalled replication forks, which arise in vivo from mismatched or misaligned primer ends. These misaligned primers can be extended by PolIV. Exhibits no 3'-5' exonuclease (proofreading) activity. May be involved in translesional synthesis, in conjunction with the beta clamp from PolIII. This is DNA polymerase IV from Clostridium perfringens (strain SM101 / Type A).